The chain runs to 276 residues: Rhomboid protease GlpG (276 aa).

6 consecutive transmembrane segments (helical) span residues 94–114, 142–162, 169–189, 192–212, 229–249, and 250–270; these read GPFT…MNVV, ALMH…WYLG, LGSG…GYVQ, FSGP…GYAW, LITF…GMSI, and ANGA…ADTL. The active-site Nucleophile is Ser201. His254 is an active-site residue.

Belongs to the peptidase S54 family.

It localises to the cell inner membrane. The catalysed reaction is Cleaves type-1 transmembrane domains using a catalytic dyad composed of serine and histidine that are contributed by different transmembrane domains.. Its function is as follows. Rhomboid-type serine protease that catalyzes intramembrane proteolysis. This is Rhomboid protease GlpG from Enterobacter sp. (strain 638).